Consider the following 165-residue polypeptide: Ribosome maturation factor RimM (165 aa).

The PRC barrel domain occupies 94–165; it reads EDEFYIADLN…YVVLNYQREI (72 aa).

This sequence belongs to the RimM family. As to quaternary structure, binds ribosomal protein uS19.

Its subcellular location is the cytoplasm. In terms of biological role, an accessory protein needed during the final step in the assembly of 30S ribosomal subunit, possibly for assembly of the head region. Essential for efficient processing of 16S rRNA. May be needed both before and after RbfA during the maturation of 16S rRNA. It has affinity for free ribosomal 30S subunits but not for 70S ribosomes. This is Ribosome maturation factor RimM from Rickettsia felis (strain ATCC VR-1525 / URRWXCal2) (Rickettsia azadi).